The sequence spans 505 residues: Bile acid-sensitive ion channel (505 aa).

Positions 1–30 (MEQTEKSKVYAENGLLEKIKLCLSKKPLPS) are binds the plasma membrane and stabilizes the channel in the closed state. Residues 1-61 (MEQTEKSKVY…NIVQNRSKIR (61 aa)) lie on the Cytoplasmic side of the membrane. A helical transmembrane segment spans residues 62–82 (RVLWLVVVLGSVSLVTWQIYI). Topologically, residues 83-459 (RLLNYFTWPT…GLFCGASLIT (377 aa)) are extracellular. 6 disulfides stabilise this stretch: cysteine 112-cysteine 207, cysteine 185-cysteine 192, cysteine 298-cysteine 377, cysteine 315-cysteine 373, cysteine 328-cysteine 350, and cysteine 330-cysteine 342. Asparagine 147, asparagine 163, asparagine 178, and asparagine 179 each carry an N-linked (GlcNAc...) asparagine glycan. Asparagine 306 carries N-linked (GlcNAc...) asparagine glycosylation. Residues asparagine 370, asparagine 405, and asparagine 421 are each glycosylated (N-linked (GlcNAc...) asparagine). Positions 454–456 (GAS) match the GAS motif; ion selectivity filter motif. A helical membrane pass occupies residues 460 to 480 (IIEIIEYLFTNFYWICIFFLL). Topologically, residues 481-505 (KISEMTQWTPPPQNHLGNKNRIEEC) are cytoplasmic.

The protein belongs to the amiloride-sensitive sodium channel (TC 1.A.6) family. ASIC5 subfamily. Forms homotrimeric channels. In terms of tissue distribution, detected in small intestine, duodenum and jejunum. Detected at very low levels in testis and rectum.

The protein resides in the apical cell membrane. Its subcellular location is the cell membrane. It catalyses the reaction Na(+)(in) = Na(+)(out). It carries out the reaction Li(+)(in) = Li(+)(out). The catalysed reaction is K(+)(in) = K(+)(out). The enzyme catalyses H(+)(in) = H(+)(out). With respect to regulation, inhibited by the diuretic drug amiloride. Forms bile acid-gated sodium channels and may play a role in bile acid-dependent absorption and secretion by epithelial cells of the bile ducts. Displays high selectivity for sodium ions but can also permit the permeation of other cations. The gating could be indirect and the consequence of alterations of the membrane environment of the channel by bile acids. As a sodium channel of type II unipolar brush cells of the vestibulocerebellum, controlling the electrical activity of these cells, could play a role in motor coordination and balance. This chain is Bile acid-sensitive ion channel, found in Homo sapiens (Human).